A 283-amino-acid polypeptide reads, in one-letter code: Pseudokinase OPG198 (283 aa).

Residues Met-1 and Lys-30 each contribute to the ATP site. A Protein kinase domain is found at 1-283 (MESFKYCFDN…DRLRKLFIQD (283 aa)).

It belongs to the protein kinase superfamily. Ser/Thr protein kinase family. Poxviruses subfamily. As to quaternary structure, interacts with B1/VPK1. Interacts with host VRK1. Interacts with host VRK2.

The protein localises to the host nucleus. Both catalytically active kinases B1/VPK1 and host VRK2 repress B12 inhibitory activity in a B1/VPK1 deletion mutant strain. Its function is as follows. Pseudokinase that plays a role in viral DNA replication repression by activating the antiviral protein BANF1 and inhibiting the activity of host VRK1, a cellular modulator of BANF1. This is Pseudokinase OPG198 (OPG198) from Vaccinia virus (strain Western Reserve) (VACV).